A 229-amino-acid polypeptide reads, in one-letter code: MATWMNINLQDANSSTMEQLTMFHDHTLMILTMITSIVTFIMVSMTTNTLINRYLLEGQTIEFIWTTIPAITLIFIALPSLHLLYLIDEINNPEMTLKVIGHQWYWSYEYSDFKNIEFDSYMKPTNELMNNEFRLLEVDNRVLLPMNKQIRILITAADVLHSWAIPSLGVKIDATPGRLNQGSIKINRPGILFGQCSEICGANHSFMPIVIESVPIKNFLKWINKSLSS.

Over 1–26 the chain is Mitochondrial intermembrane; sequence MATWMNINLQDANSSTMEQLTMFHDH. Residues 27–48 form a helical membrane-spanning segment; the sequence is TLMILTMITSIVTFIMVSMTTN. At 49 to 62 the chain is on the mitochondrial matrix side; that stretch reads TLINRYLLEGQTIE. The chain crosses the membrane as a helical span at residues 63 to 82; the sequence is FIWTTIPAITLIFIALPSLH. Topologically, residues 83–229 are mitochondrial intermembrane; the sequence is LLYLIDEINN…LKWINKSLSS (147 aa). Positions 161, 196, 198, 200, 204, and 207 each coordinate Cu cation. Mg(2+) is bound at residue E198.

It belongs to the cytochrome c oxidase subunit 2 family. Component of the cytochrome c oxidase (complex IV, CIV), a multisubunit enzyme composed of a catalytic core of 3 subunits and several supernumerary subunits. The complex exists as a monomer or a dimer and forms supercomplexes (SCs) in the inner mitochondrial membrane with ubiquinol-cytochrome c oxidoreductase (cytochrome b-c1 complex, complex III, CIII). Cu cation is required as a cofactor.

The protein localises to the mitochondrion inner membrane. It catalyses the reaction 4 Fe(II)-[cytochrome c] + O2 + 8 H(+)(in) = 4 Fe(III)-[cytochrome c] + 2 H2O + 4 H(+)(out). In terms of biological role, component of the cytochrome c oxidase, the last enzyme in the mitochondrial electron transport chain which drives oxidative phosphorylation. The respiratory chain contains 3 multisubunit complexes succinate dehydrogenase (complex II, CII), ubiquinol-cytochrome c oxidoreductase (cytochrome b-c1 complex, complex III, CIII) and cytochrome c oxidase (complex IV, CIV), that cooperate to transfer electrons derived from NADH and succinate to molecular oxygen, creating an electrochemical gradient over the inner membrane that drives transmembrane transport and the ATP synthase. Cytochrome c oxidase is the component of the respiratory chain that catalyzes the reduction of oxygen to water. Electrons originating from reduced cytochrome c in the intermembrane space (IMS) are transferred via the dinuclear copper A center (CU(A)) of subunit 2 and heme A of subunit 1 to the active site in subunit 1, a binuclear center (BNC) formed by heme A3 and copper B (CU(B)). The BNC reduces molecular oxygen to 2 water molecules using 4 electrons from cytochrome c in the IMS and 4 protons from the mitochondrial matrix. In Oncopeltus fasciatus (Large milkweed bug), this protein is Cytochrome c oxidase subunit 2 (COII).